The chain runs to 212 residues: uncharacterized protein (212 aa).

An N-terminal signal peptide occupies residues Met-1–Gly-18. A helical membrane pass occupies residues Ile-186 to Val-208.

This sequence to A.fulgidus AF_0540.

The protein localises to the membrane. This is an uncharacterized protein from Archaeoglobus fulgidus (strain ATCC 49558 / DSM 4304 / JCM 9628 / NBRC 100126 / VC-16).